A 312-amino-acid polypeptide reads, in one-letter code: Malate dehydrogenase (312 aa).

NAD(+) contacts are provided by residues 12-17 and Asp36; that span reads GAGFTG. Substrate-binding residues include Arg87 and Arg93. Residues Asn100 and 123 to 125 contribute to the NAD(+) site; that span reads LTN. Asn125 serves as a coordination point for substrate. Phosphoserine is present on Ser149. Residue Arg156 coordinates substrate. His180 acts as the Proton acceptor in catalysis.

This sequence belongs to the LDH/MDH superfamily. MDH type 3 family.

It catalyses the reaction (S)-malate + NAD(+) = oxaloacetate + NADH + H(+). Its function is as follows. Catalyzes the reversible oxidation of malate to oxaloacetate. The protein is Malate dehydrogenase of Geobacillus sp. (strain WCH70).